A 516-amino-acid chain; its full sequence is Delta(24)-sterol reductase (516 aa).

Residues 1–22 (MEPAVSLAVCALLFLLWVRVKG) form the signal peptide. Residues 23 to 31 (LEFVLIHQR) lie on the Lumenal side of the membrane. A helical transmembrane segment spans residues 32 to 52 (WVFVCLFLLPLSLIFDIYYYV). The Cytoplasmic portion of the chain corresponds to 53 to 516 (RAWVVFKLSS…YDKICKAARH (464 aa)). The 177-residue stretch at 58-234 (FKLSSAPRLH…VAAEIRIIPA (177 aa)) folds into the FAD-binding PCMH-type domain. 163 to 175 (TVGGLIMGTGIES) provides a ligand contact to FAD.

This sequence belongs to the FAD-binding oxidoreductase/transferase type 4 family. As to quaternary structure, interacts with DHCR7; this interaction regulates DHCR7 activity. FAD is required as a cofactor.

Its subcellular location is the endoplasmic reticulum membrane. The protein localises to the golgi apparatus membrane. The catalysed reaction is cholesterol + NADP(+) = desmosterol + NADPH + H(+). It carries out the reaction lanosterol + NADPH + H(+) = 24,25-dihydrolanosterol + NADP(+). The enzyme catalyses 5alpha-cholest-8-en-3beta-ol + NADP(+) = zymosterol + NADPH + H(+). The protein operates within steroid biosynthesis; cholesterol biosynthesis. Functionally, catalyzes the reduction of the delta-24 double bond of sterol intermediates during cholesterol biosynthesis. In addition to its cholesterol-synthesizing activity, can protect cells from oxidative stress by reducing caspase 3 activity during apoptosis induced by oxidative stress. Also protects against amyloid-beta peptide-induced apoptosis. This Macaca fascicularis (Crab-eating macaque) protein is Delta(24)-sterol reductase (DHCR24).